Here is a 373-residue protein sequence, read N- to C-terminus: Thyroid hormone receptor beta (373 aa).

Residues methionine 1–leucine 18 are modulating. Residues cysteine 19, cysteine 22, cysteine 36, cysteine 39, cysteine 57, cysteine 63, cysteine 73, and cysteine 76 each coordinate Zn(2+). 2 NR C4-type zinc fingers span residues cysteine 19 to cysteine 39 and cysteine 57 to cysteine 81. A DNA-binding region (nuclear receptor) is located at residues cysteine 19–aspartate 93. The 245-residue stretch at glutamate 129–aspartate 373 folds into the NR LBD domain. 3,3',5-triiodo-L-thyronine contacts are provided by arginine 194, asparagine 243, and histidine 347. Residues arginine 194, asparagine 243, and histidine 347 each coordinate L-thyroxine.

This sequence belongs to the nuclear hormone receptor family. NR1 subfamily.

The protein localises to the nucleus. Its function is as follows. Nuclear hormone receptor that can act as a repressor or activator of transcription. High affinity receptor for thyroid hormones, including triiodothyronine and thyroxine. The polypeptide is Thyroid hormone receptor beta (thrb) (Aquarana catesbeiana (American bullfrog)).